The primary structure comprises 188 residues: Fructose-1-phosphate phosphatase YqaB (188 aa).

Aspartate 11 acts as the Nucleophile in catalysis. Aspartate 11, aspartate 13, and aspartate 167 together coordinate Mg(2+). 11–13 is a substrate binding site; it reads DMD.

This sequence belongs to the HAD-like hydrolase superfamily. CbbY/CbbZ/Gph/YieH family. It depends on Mg(2+) as a cofactor. Mn(2+) serves as cofactor. Requires Co(2+) as cofactor. The cofactor is Zn(2+).

Its function is as follows. Catalyzes strongly the dephosphorylation of fructose-1-phosphate (Fru1P) and slightly the dephosphorylation of 6-phosphogluconate (6P-Glu). It has low beta-phosphoglucomutase activity. This Escherichia coli (strain K12) protein is Fructose-1-phosphate phosphatase YqaB (yqaB).